The sequence spans 671 residues: DNA ligase (671 aa).

Residues 37–41 (DIEYD), 86–87 (SL), and Glu-117 each bind NAD(+). Residue Lys-119 is the N6-AMP-lysine intermediate of the active site. Arg-140, Glu-177, Lys-295, and Lys-319 together coordinate NAD(+). Residues Cys-413, Cys-416, Cys-431, and Cys-437 each coordinate Zn(2+). The 78-residue stretch at 594 to 671 (IISAAVFGKT…DEEEMLNLLK (78 aa)) folds into the BRCT domain.

It belongs to the NAD-dependent DNA ligase family. LigA subfamily. Mg(2+) is required as a cofactor. Requires Mn(2+) as cofactor.

It catalyses the reaction NAD(+) + (deoxyribonucleotide)n-3'-hydroxyl + 5'-phospho-(deoxyribonucleotide)m = (deoxyribonucleotide)n+m + AMP + beta-nicotinamide D-nucleotide.. DNA ligase that catalyzes the formation of phosphodiester linkages between 5'-phosphoryl and 3'-hydroxyl groups in double-stranded DNA using NAD as a coenzyme and as the energy source for the reaction. It is essential for DNA replication and repair of damaged DNA. This chain is DNA ligase, found in Polynucleobacter asymbioticus (strain DSM 18221 / CIP 109841 / QLW-P1DMWA-1) (Polynucleobacter necessarius subsp. asymbioticus).